The primary structure comprises 141 residues: Hemoglobin subunit alpha (141 aa).

Residues 1–141 (VLSSADKANI…VSTVLTSKYR (141 aa)) enclose the Globin domain. At Ser3 the chain carries Phosphoserine. An N6-succinyllysine mark is found at Lys7 and Lys11. N6-acetyllysine; alternate is present on Lys16. Position 16 is an N6-succinyllysine; alternate (Lys16). Tyr24 is subject to Phosphotyrosine. Lys40 carries the N6-succinyllysine modification. Ser49 bears the Phosphoserine mark. Position 58 (His58) interacts with O2. His87 contacts heme b. Ser102 is modified (phosphoserine). The residue at position 108 (Thr108) is a Phosphothreonine. A phosphoserine mark is found at Ser124 and Ser131. A phosphothreonine mark is found at Thr134 and Thr137. The residue at position 138 (Ser138) is a Phosphoserine.

It belongs to the globin family. As to quaternary structure, heterotetramer of two alpha chains and two beta chains. Red blood cells.

Functionally, involved in oxygen transport from the lung to the various peripheral tissues. Its function is as follows. Hemopressin acts as an antagonist peptide of the cannabinoid receptor CNR1. Hemopressin-binding efficiently blocks cannabinoid receptor CNR1 and subsequent signaling. This chain is Hemoglobin subunit alpha (HBA), found in Proteles cristata (Aardwolf).